We begin with the raw amino-acid sequence, 58 residues long: Large ribosomal subunit protein eL24 (58 aa).

Zn(2+)-binding residues include cysteine 6, cysteine 9, cysteine 32, and cysteine 36. A C4-type zinc finger spans residues 6–36; that stretch reads CSFCGYDIEPGTGKMYVRRDGRVFYFCSGKC.

This sequence belongs to the eukaryotic ribosomal protein eL24 family. Part of the 50S ribosomal subunit. Forms a cluster with proteins L3 and L14. It depends on Zn(2+) as a cofactor.

Binds to the 23S rRNA. The sequence is that of Large ribosomal subunit protein eL24 from Archaeoglobus fulgidus (strain ATCC 49558 / DSM 4304 / JCM 9628 / NBRC 100126 / VC-16).